The following is an 89-amino-acid chain: Small ribosomal subunit protein uS15 (89 aa).

This sequence belongs to the universal ribosomal protein uS15 family. In terms of assembly, part of the 30S ribosomal subunit. Forms a bridge to the 50S subunit in the 70S ribosome, contacting the 23S rRNA.

In terms of biological role, one of the primary rRNA binding proteins, it binds directly to 16S rRNA where it helps nucleate assembly of the platform of the 30S subunit by binding and bridging several RNA helices of the 16S rRNA. Forms an intersubunit bridge (bridge B4) with the 23S rRNA of the 50S subunit in the ribosome. The protein is Small ribosomal subunit protein uS15 of Chlorobium phaeobacteroides (strain DSM 266 / SMG 266 / 2430).